The chain runs to 545 residues: Beta-sesquiphellandrene synthase (545 aa).

The Mg(2+) site is built by D299, D303, N443, S447, and E451. The DDXXD motif signature appears at 299–303 (DDIMD).

The protein belongs to the terpene synthase family. Mg(2+) serves as cofactor. The cofactor is Mn(2+).

Its subcellular location is the cytoplasm. It carries out the reaction (2E,6E)-farnesyl diphosphate = beta-sesquiphellandrene + diphosphate. It functions in the pathway secondary metabolite biosynthesis; terpenoid biosynthesis. In terms of biological role, sesquiterpene synthase converting farnesyl diphosphate into beta-sesquiphellandrene and six minor products, zingiberene, 7-epi-sesquithujene, sesquisabinene A, (E)-alpha-bergamotene, (E)-beta-farnesene and beta-bisabolene. Can also accept geranyl diphosphate as substrate, producing nine monoterpenes, with myrcene and limonene as the major products. This Sorghum bicolor (Sorghum) protein is Beta-sesquiphellandrene synthase (TPS2).